We begin with the raw amino-acid sequence, 106 residues long: Large ribosomal subunit protein bL21 (106 aa).

This sequence belongs to the bacterial ribosomal protein bL21 family. Part of the 50S ribosomal subunit. Contacts protein L20.

Its function is as follows. This protein binds to 23S rRNA in the presence of protein L20. The protein is Large ribosomal subunit protein bL21 of Xylella fastidiosa (strain 9a5c).